Reading from the N-terminus, the 658-residue chain is Vertnin (658 aa).

The protein belongs to the vertnin family.

The protein resides in the nucleus. Functionally, acts as a transcription factor that regulates development of thoracic vertebrae. This chain is Vertnin (VRTN), found in Bos taurus (Bovine).